The chain runs to 441 residues: UDP-N-acetylmuramoylalanine--D-glutamate ligase (441 aa).

Residue 113–119 (GSNAKST) coordinates ATP.

It belongs to the MurCDEF family.

The protein localises to the cytoplasm. It catalyses the reaction UDP-N-acetyl-alpha-D-muramoyl-L-alanine + D-glutamate + ATP = UDP-N-acetyl-alpha-D-muramoyl-L-alanyl-D-glutamate + ADP + phosphate + H(+). The protein operates within cell wall biogenesis; peptidoglycan biosynthesis. Its function is as follows. Cell wall formation. Catalyzes the addition of glutamate to the nucleotide precursor UDP-N-acetylmuramoyl-L-alanine (UMA). The polypeptide is UDP-N-acetylmuramoylalanine--D-glutamate ligase (Alcanivorax borkumensis (strain ATCC 700651 / DSM 11573 / NCIMB 13689 / SK2)).